A 687-amino-acid polypeptide reads, in one-letter code: Fatty acid oxidation complex subunit alpha (687 aa).

The interval 1 to 191 is enoyl-CoA hydratase; sequence MKNTSAFAWT…KLGVVDASVP (191 aa). The interval 307 to 687 is 3-hydroxyacyl-CoA dehydrogenase; that stretch reads KSIDYVGVLG…ADKYGDRFIE (381 aa).

The protein in the N-terminal section; belongs to the enoyl-CoA hydratase/isomerase family. It in the central section; belongs to the 3-hydroxyacyl-CoA dehydrogenase family. In terms of assembly, heterotetramer of two alpha chains (FadJ) and two beta chains (FadI).

The protein localises to the cytoplasm. It carries out the reaction a (3S)-3-hydroxyacyl-CoA = a (2E)-enoyl-CoA + H2O. The catalysed reaction is a 4-saturated-(3S)-3-hydroxyacyl-CoA = a (3E)-enoyl-CoA + H2O. It catalyses the reaction a (3S)-3-hydroxyacyl-CoA + NAD(+) = a 3-oxoacyl-CoA + NADH + H(+). The enzyme catalyses (3S)-3-hydroxybutanoyl-CoA = (3R)-3-hydroxybutanoyl-CoA. The protein operates within lipid metabolism; fatty acid beta-oxidation. Catalyzes the formation of a hydroxyacyl-CoA by addition of water on enoyl-CoA. Also exhibits 3-hydroxyacyl-CoA epimerase and 3-hydroxyacyl-CoA dehydrogenase activities. This chain is Fatty acid oxidation complex subunit alpha, found in Aliivibrio fischeri (strain ATCC 700601 / ES114) (Vibrio fischeri).